Reading from the N-terminus, the 173-residue chain is uncharacterized protein (173 aa).

3 helical membrane passes run 24-44 (VAFIAIPISQFCFFNLLWLFF), 82-102 (YILFNILIFATNILVICSYFI), and 135-155 (LIKRFLAYITFPIGIFFILFS).

It is found in the cell membrane. This is an uncharacterized protein from Rickettsia prowazekii (strain Madrid E).